A 151-amino-acid polypeptide reads, in one-letter code: Acidic phospholipase A2 4 (151 aa).

An N-terminal signal peptide occupies residues 1–27 (MYPAHLLVLLAVCVSLLGAASIPARPL). 7 disulfides stabilise this stretch: cysteine 38–cysteine 104, cysteine 54–cysteine 151, cysteine 56–cysteine 72, cysteine 71–cysteine 132, cysteine 78–cysteine 125, cysteine 88–cysteine 118, and cysteine 111–cysteine 123. Tyrosine 55, glycine 57, and glycine 59 together coordinate Ca(2+). The active site involves histidine 75. Aspartate 76 contributes to the Ca(2+) binding site. Aspartate 126 is a catalytic residue.

Belongs to the phospholipase A2 family. Group I subfamily. D49 sub-subfamily. The cofactor is Ca(2+). Expressed by the venom gland.

It is found in the secreted. It catalyses the reaction a 1,2-diacyl-sn-glycero-3-phosphocholine + H2O = a 1-acyl-sn-glycero-3-phosphocholine + a fatty acid + H(+). In terms of biological role, PLA2 catalyzes the calcium-dependent hydrolysis of the 2-acyl groups in 3-sn-phosphoglycerides. The polypeptide is Acidic phospholipase A2 4 (Tropidechis carinatus (Australian rough-scaled snake)).